Consider the following 1235-residue polypeptide: MRLNIPTKPEDALWTDDQWKAIQANGNNILVAAAAGSGKTAVLVTRIIEKLINETENLNVDELLIVTFTNVSAAEMKYRIGKSLEEALVQNPESVHLKKQVALLNYASISTLHSFCLEIIRKHYFEADIDPNFRLIEPIESSMIRDEVLEDLLEKEYSIENNEGFFHLVESFTGDRSDAELHTLISKLYDFSRANPNPDLWLEQMVSFYDTQAITSITELPYFPIIKEDIQLRINQAKSYLLTAIDYANENNGPAPYLSTLENDLAQINTLSSISWDNWQDVKFGFESIDFKRIPALKNKADFDEEYVEEAKKFRDAAKKEVKNVLIDWFSREEENYLSDLEKMKPDIKTLSELVKKFAENFFEEKQQRGVLDFNDLEHLALKILLKNGAPSDVANSYKKQFKEVLIDEYQDTNMVQETILLLVTNSNDTKGNLFMVGDVKQSIYRFRLAEPTLFMAKYQEYQQDGEGSGIRIDLSQNFRSRKEVLDATNFIFHQLMDKHIAEIDYDEAAELTLGASFPEANNMATELLLIDMKSEEKESEDELSPQELQKNQVESRAIATKIREMIDNKFPIYDKKLQQNRPIQYRDIVILARAMTSAPDMEEAMKIKDIPFYANNNSGYFETTEVATMIALMKVIDNPYQDISLAAVLRSPIIGLNEEELGQIRMAKKKGYFFDAMLAYKDITVSDAANKISRFITQLNNWRELSIRENLTALIWQIYQETNFYEFVGGLPGGKQRQANLRALYDRANQYEKTSFRGLFRFVRFVERLEVRGDDLGTAKTLGEKEDVVRMMTIHASKGLEFPVVIVSGLSRKFNMRDIYSKTLLDKDYGFASNYRDIEKMIVYPTIMQQAIKQKKYREMIAEEMRVLYVALTRAEEKLILTATVPDFEKTSKNWLQVSNQQETILPAAIRAKAKCYLDWIGNATIRHSHFKELLCEEKIKTLPTDMKLQVEIKTKEMFLTDDLEKEKSDNWMENVKAHKQVPVKSPYKDEIERFMHYQYKDEEATGIRAKQSVTELKRQFSLQDSWSDTSILKEFQKVSLDRPKFLQQNKLSATEIGTAMHTLMQAVPLDDKPTEKDLVSLLQLMREKDILTEAQIKAINVNQIIAFFESALGKTVLQKKDKVKREVPFSYLLPAAKLYNQTNLDEHVLIQGVVDSMIEEEDSIILIDYKTDKIEGRYDNWEAAEKVMKERYQIQIKLYAEAIQAISRKKVSHAYLYFFDGQHICQINIEEGI.

Residues 12 to 482 form the UvrD-like helicase ATP-binding domain; that stretch reads ALWTDDQWKA…IDLSQNFRSR (471 aa). 33 to 40 contributes to the ATP binding site; the sequence is AAAGSGKT. In terms of domain architecture, UvrD-like helicase C-terminal spans 509–800; sequence AAELTLGASF…RMMTIHASKG (292 aa).

The protein belongs to the helicase family. AddA subfamily. In terms of assembly, heterodimer of AddA and AddB/RexB. The cofactor is Mg(2+).

It catalyses the reaction Couples ATP hydrolysis with the unwinding of duplex DNA by translocating in the 3'-5' direction.. It carries out the reaction ATP + H2O = ADP + phosphate + H(+). Functionally, the heterodimer acts as both an ATP-dependent DNA helicase and an ATP-dependent, dual-direction single-stranded exonuclease. Recognizes the chi site generating a DNA molecule suitable for the initiation of homologous recombination. The AddA nuclease domain is required for chi fragment generation; this subunit has the helicase and 3' -&gt; 5' nuclease activities. This Listeria innocua serovar 6a (strain ATCC BAA-680 / CLIP 11262) protein is ATP-dependent helicase/nuclease subunit A.